Reading from the N-terminus, the 394-residue chain is Acetate kinase (394 aa).

Asn-10 serves as a coordination point for Mg(2+). Lys-17 is a binding site for ATP. Residue Arg-87 participates in substrate binding. Asp-144 acts as the Proton donor/acceptor in catalysis. ATP is bound by residues 204–208 (HLGNG), 279–281 (DMR), and 327–331 (GIGEN). Glu-381 contacts Mg(2+).

Belongs to the acetokinase family. As to quaternary structure, homodimer. Mg(2+) is required as a cofactor. It depends on Mn(2+) as a cofactor.

It is found in the cytoplasm. It catalyses the reaction acetate + ATP = acetyl phosphate + ADP. It functions in the pathway metabolic intermediate biosynthesis; acetyl-CoA biosynthesis; acetyl-CoA from acetate: step 1/2. Functionally, catalyzes the formation of acetyl phosphate from acetate and ATP. Can also catalyze the reverse reaction. The sequence is that of Acetate kinase from Pseudomonas aeruginosa (strain LESB58).